The primary structure comprises 307 residues: MLKGRNLLDPMDFSLEELEEVFKLADEIIEEPEKFLHVCDGKILATLFYEPSTRTRFSFEAAMLRLGGQVIGFSEPNSSSVAKGESVADTIRTVGCYADIAAMRHPKEGAPAIAAMYSEIPVINAGDGSHQHPTQTLTDLLTIRSLKGDLSNLTIGCCGDLKFGRTVHSLVKALSRYKNNKFVFMSPEELKIPDYIRKEILEKNNIEYKEVSKMEDAMAELDILYMTRVQRERFFNEDDYVRLKDSYILDGEKMRYAKKDMMVLHPLPRVNEIAYEIDQDPRGCYFKQAKYGMYVRMALIAKLLGVR.

Positions 54 and 55 each coordinate carbamoyl phosphate. Lysine 83 contributes to the L-aspartate binding site. Positions 104, 132, and 135 each coordinate carbamoyl phosphate. The L-aspartate site is built by arginine 165 and arginine 228. Positions 267 and 268 each coordinate carbamoyl phosphate.

It belongs to the aspartate/ornithine carbamoyltransferase superfamily. ATCase family. In terms of assembly, heterododecamer (2C3:3R2) of six catalytic PyrB chains organized as two trimers (C3), and six regulatory PyrI chains organized as three dimers (R2).

The catalysed reaction is carbamoyl phosphate + L-aspartate = N-carbamoyl-L-aspartate + phosphate + H(+). It functions in the pathway pyrimidine metabolism; UMP biosynthesis via de novo pathway; (S)-dihydroorotate from bicarbonate: step 2/3. Its function is as follows. Catalyzes the condensation of carbamoyl phosphate and aspartate to form carbamoyl aspartate and inorganic phosphate, the committed step in the de novo pyrimidine nucleotide biosynthesis pathway. This chain is Aspartate carbamoyltransferase catalytic subunit, found in Clostridium botulinum (strain Okra / Type B1).